Here is a 257-residue protein sequence, read N- to C-terminus: Mediator of RNA polymerase II transcription subunit 7 (257 aa).

The interval 33-74 is disordered; sequence EWQRQQNDEEIETKQEEADDKDEKDNEKQNETQDTVPPGELR. A compositionally biased stretch (basic and acidic residues) spans 44-63; the sequence is ETKQEEADDKDEKDNEKQNE.

The protein belongs to the Mediator complex subunit 7 family. In terms of assembly, component of the Mediator complex.

It is found in the nucleus. Component of the Mediator complex, a coactivator involved in the regulated transcription of nearly all RNA polymerase II-dependent genes. Mediator functions as a bridge to convey information from gene-specific regulatory proteins to the basal RNA polymerase II transcription machinery. Mediator is recruited to promoters by direct interactions with regulatory proteins and serves as a scaffold for the assembly of a functional preinitiation complex with RNA polymerase II and the general transcription factors. The sequence is that of Mediator of RNA polymerase II transcription subunit 7 (MED7) from Scheffersomyces stipitis (strain ATCC 58785 / CBS 6054 / NBRC 10063 / NRRL Y-11545) (Yeast).